The sequence spans 2116 residues: Non-structural polyprotein p200 (2116 aa).

Residues 36–49 are required for efficient proteolysis and P150-P90 interaction; sequence EVRDVVTAAQKRAI. In terms of domain architecture, Alphavirus-like MT spans 57–247; it reads VFTQMQVSDH…TRPCTTRIYQ (191 aa). The interval 715–779 is disordered; it reads GQLAATSPPP…PVPPTTAEPA (65 aa). Composition is skewed to pro residues over residues 721–730 and 745–775; these read SPPPGDPPPP and TPPP…PPTT. Short sequence motifs (pxxPxR; class II SH3-binding) lie at residues 727-732, 747-752, and 761-766; these read PPPPRR, PPAPVR, and PPAPPR. The Macro domain occupies 806–985; the sequence is SDIVESYARA…LTHASVLVGA (180 aa). The disordered stretch occupies residues 992–1031; sequence VSPPPTEPLASCPAGDPGRPAQRSASPPATPLGDATAPEP. The region spanning 1000 to 1301 is the Peptidase C27 domain; the sequence is LASCPAGDPG…WLAVPLSRGG (302 aa). Cys-1152 acts as the For cysteine protease activity in catalysis. The interaction with host CALM1 stretch occupies residues 1152-1183; sequence CWLRAAANVAQAARACGAYTSAGCPKCAYGRA. Residues Cys-1175, Cys-1178, Cys-1227, and His-1273 each coordinate Zn(2+). The EF-hand-like stretch occupies residues 1193–1228; that stretch reads FAALSQWWSASHADASPDGTGDPLDPLMETVGCACS. His-1273 serves as the catalytic For cysteine protease activity. One can recognise a (+)RNA virus helicase ATP-binding domain in the interval 1320-1468; the sequence is EVRRLGDDAM…VPDRWPTGRS (149 aa). 1352 to 1359 is an a ribonucleoside 5'-triphosphate binding site; sequence MAAGAGKT. A (+)RNA virus helicase C-terminal domain is found at 1469 to 1609; sequence RHTWRFPDCW…ELKEVPAGID (141 aa). Residues 1700 to 1900 form an involved in P150-P90 interaction region; that stretch reads YRAGEDGSTL…VELEISAALL (201 aa). The region spanning 1870–1981 is the RdRp catalytic domain; that stretch reads TNAIEVDFTE…FLPEGARNAA (112 aa). A Human RB1 binding motif is present at residues 1902 to 1906; it reads LPCAE.

In terms of assembly, interacts with RNA-directed RNA polymerase p90. Interacts with host CALM1; this interaction is necessary for the protease activity and viral infectivity. Interacts with host C1QBP. Interacts with the capsid protein. As to quaternary structure, interacts with human RB1/retinoblastoma protein. Interacts with protease/methyltransferase p150. Zn(2+) serves as cofactor. In terms of processing, specific enzymatic cleavage by its own cysteine protease yield mature proteins p150 and p90.

It localises to the host membrane. It is found in the host cytoplasm. The protein localises to the host perinuclear region. It carries out the reaction RNA(n) + a ribonucleoside 5'-triphosphate = RNA(n+1) + diphosphate. The catalysed reaction is a ribonucleoside 5'-triphosphate + H2O = a ribonucleoside 5'-diphosphate + phosphate + H(+). It catalyses the reaction ATP + H2O = ADP + phosphate + H(+). Probable principal replicase for the negative-strand DNA, which replicates the 40S (+) genomic RNA into (-) antigenomic RNA. It cannot replicate the (-) into (+) until cleaved into p150 and p90 mature proteins. Functionally, protease that cleaves the precursor polyprotein into two mature products. Together with RNA-directed RNA polymerase p90, replicates the 40S genomic and antigenomic RNA by recognizing replications specific signals. The heterodimer P150/p90 is probably the principal replicase for positive-strand genomic RNA and the 24S subgenomic RNA, which codes for structural proteins. Responsible for the mRNA-capping of the viral mRNAs. This function is necessary since all viral RNAs are synthesized in the cytoplasm, and host capping enzymes are restricted to the nucleus. Forms fibers late in the infection that may be involved in cell-to-cell spread of the virus RNA in the absence of virus particle formation. Its function is as follows. Together with protease/methyltransferase p150, replicates the 40S genomic and antigenomic RNA by recognizing replications specific signals. The heterodimer P150/p90 is probably the principal replicase for positive-strand genomic RNA and the 24S subgenomic RNA, which codes for structural proteins. A helicase activity is probably also present. This Rubella virus (strain M33) (RUBV) protein is Non-structural polyprotein p200.